Consider the following 116-residue polypeptide: Putative pterin-4-alpha-carbinolamine dehydratase (116 aa).

It belongs to the pterin-4-alpha-carbinolamine dehydratase family.

It catalyses the reaction (4aS,6R)-4a-hydroxy-L-erythro-5,6,7,8-tetrahydrobiopterin = (6R)-L-erythro-6,7-dihydrobiopterin + H2O. This Xylella fastidiosa (strain M12) protein is Putative pterin-4-alpha-carbinolamine dehydratase.